A 286-amino-acid chain; its full sequence is MKFGCVQFFPKLGKVNENIVHLRQLLDQHSEALQSVKLLVFPEMCLTGYNFKNSESIQPFLENVTSNHCPSIQFAQEVSEQYRCYTIIGFPEFQNSNGISTLYNSTALISPKKELLNVYHKHFLFETDKSWATEGKGFSFEPCIPELGPISMAICMDINPYDFKAPFEKFEYANFILRELEHQQMVSSNVSRPIICLSMAWLVSDDKVIDASLPDIKNLHYWTTRLSPLINSNTDAIVLVANRWGKENDLNFSGTSCIMELSQGRAILHGVLKAAENGIVVGELEK.

In terms of domain architecture, CN hydrolase spans 1–286; the sequence is MKFGCVQFFP…NGIVVGELEK (286 aa). The active-site Proton acceptor is the Glu43. Lys121 acts as the Proton donor in catalysis. The Nucleophile role is filled by Cys155.

This sequence belongs to the carbon-nitrogen hydrolase superfamily.

It localises to the cytoplasm. It is found in the nucleus. Functionally, deamidates N-terminal Asn and Gln. Component of a targeting complex in the N-end rule pathway. This chain is Protein N-terminal amidase (nta1), found in Schizosaccharomyces pombe (strain 972 / ATCC 24843) (Fission yeast).